A 158-amino-acid polypeptide reads, in one-letter code: Chromobox protein homolog 7 (158 aa).

A Chromo domain is found at 11–69; that stretch reads FAVESIRKKRVRKGKVEYLVKWKGWPPKYSTWEPEEHILDPRLVMAYEEKEERDRASGY. Residues 60 to 127 form a disordered region; the sequence is KEERDRASGY…WTPTLPSSEV (68 aa). Basic residues predominate over residues 68-78; that stretch reads GYRKRGPKPRR.

As to quaternary structure, component of a PRC1-like complex. Distinct PRC1-like core complexes are composed of a RING1 subunit (RING1B or RING1A), one of the six PCGF proteins (PCGF1-6), one PHC protein (PHC1-3) and one of the CBX proteins (CBX2, CBX4, CBX6, CBX7 or CBX8). The composition of the PRC1 complex may differ between the PRC1 complex in pluripotent embryonic stem cells containing RNF2, CBX7 and PCGF2, and the PRC1 complex in differentiating cells containing RNF2, CBX2, CBX4 and BMI1. Interacts with RING1. Interacts with RNF2, PHC1 and PCGF2. Interacts (via chromodomain) with histone H3K9Me3 and H3K27me3. Interacts with H3K9Me2 and H4K20Me1. Interacts (via chromodomain) with single-stranded and double-stranded RNA; RNA binding seems to be required for the localization to chromatin. Interacts with PCGF1, PCGF3, PCGF5 and PCGF6. As to expression, expressed in embryonic stem cells.

It is found in the nucleus. Its subcellular location is the chromosome. Its function is as follows. Component of a Polycomb group (PcG) multiprotein PRC1-like complex, a complex class required to maintain the transcriptionally repressive state of many genes, including Hox genes, throughout development. PcG PRC1 complex acts via chromatin remodeling and modification of histones; it mediates monoubiquitination of histone H2A 'Lys-119', rendering chromatin heritably changed in its expressibility. Promotes histone H3 trimethylation at 'Lys-9' (H3K9me3). Binds to histone H3 trimethylated at 'Lys-9' (H3K9me3) or at 'Lys-27' (H3K27me3). Trimethylation at 'Lys-27' (H3K27me3) is important for chromatin recruitment. May possibly also bind trimethylated lysine residues in other proteins (in vitro). Binds non-coding, single-stranded RNA and double-stranded RNA. Plays a role in the timely repression of differentiation-specific genes in pluripotent embryonic stem cells to maintain the undifferentiated state. Regulator of cellular lifespan by maintaining the repression of CDKN2A, but not by inducing telomerase activity. This chain is Chromobox protein homolog 7 (Cbx7), found in Mus musculus (Mouse).